Reading from the N-terminus, the 647-residue chain is DNA topoisomerase 3 (647 aa).

A Toprim domain is found at T2–I135. Residues E8, D104, and D106 each coordinate Mg(2+). The region spanning F156 to I608 is the Topo IA-type catalytic domain. Residues S195–Q200 form an interaction with DNA region. Y332 (O-(5'-phospho-DNA)-tyrosine intermediate) is an active-site residue.

The protein belongs to the type IA topoisomerase family. Mg(2+) is required as a cofactor.

It carries out the reaction ATP-independent breakage of single-stranded DNA, followed by passage and rejoining.. Releases the supercoiling and torsional tension of DNA, which is introduced during the DNA replication and transcription, by transiently cleaving and rejoining one strand of the DNA duplex. Introduces a single-strand break via transesterification at a target site in duplex DNA. The scissile phosphodiester is attacked by the catalytic tyrosine of the enzyme, resulting in the formation of a DNA-(5'-phosphotyrosyl)-enzyme intermediate and the expulsion of a 3'-OH DNA strand. The free DNA strand then undergoes passage around the unbroken strand, thus removing DNA supercoils. Finally, in the religation step, the DNA 3'-OH attacks the covalent intermediate to expel the active-site tyrosine and restore the DNA phosphodiester backbone. The chain is DNA topoisomerase 3 from Vibrio cholerae serotype O1 (strain ATCC 39315 / El Tor Inaba N16961).